The sequence spans 482 residues: Ribulose bisphosphate carboxylase large chain (482 aa).

Positions 1 to 2 are excised as a propeptide; the sequence is MS. At proline 3 the chain carries N-acetylproline. The residue at position 14 (lysine 14) is an N6,N6,N6-trimethyllysine. The substrate site is built by asparagine 123 and threonine 173. Lysine 175 (proton acceptor) is an active-site residue. Lysine 177 contacts substrate. The Mg(2+) site is built by lysine 201, aspartate 203, and glutamate 204. The residue at position 201 (lysine 201) is an N6-carboxylysine. The active-site Proton acceptor is histidine 294. The substrate site is built by arginine 295, histidine 327, and serine 379.

The protein belongs to the RuBisCO large chain family. Type I subfamily. In terms of assembly, heterohexadecamer of 8 large chains and 8 small chains; disulfide-linked. The disulfide link is formed within the large subunit homodimers. It depends on Mg(2+) as a cofactor. In terms of processing, the disulfide bond which can form in the large chain dimeric partners within the hexadecamer appears to be associated with oxidative stress and protein turnover.

It localises to the plastid. Its subcellular location is the chloroplast. The enzyme catalyses 2 (2R)-3-phosphoglycerate + 2 H(+) = D-ribulose 1,5-bisphosphate + CO2 + H2O. It carries out the reaction D-ribulose 1,5-bisphosphate + O2 = 2-phosphoglycolate + (2R)-3-phosphoglycerate + 2 H(+). Functionally, ruBisCO catalyzes two reactions: the carboxylation of D-ribulose 1,5-bisphosphate, the primary event in carbon dioxide fixation, as well as the oxidative fragmentation of the pentose substrate in the photorespiration process. Both reactions occur simultaneously and in competition at the same active site. The polypeptide is Ribulose bisphosphate carboxylase large chain (Phytolacca americana (American pokeweed)).